Reading from the N-terminus, the 360-residue chain is DAZ-associated protein 1 (360 aa).

2 RRM domains span residues G10–P97 and N114–P191. Disordered regions lie at residues H73–I116 and V184–F345. Basic and acidic residues-rich tracts occupy residues Q91–R112 and V184–K195. Polar residues predominate over residues G203 to S231. Positions T242 to G253 are enriched in gly residues. Over residues G271–D301 the composition is skewed to pro residues. Over residues Q328–F345 the composition is skewed to polar residues.

As to quaternary structure, component of a mRNP complex, at least composed of DAZAP1, IGF2BP3-A, STAU and VgRBP60. Binds to the 3'-UTR of Vg1 mRNA. Interacts with profilin, a protein involved in actin assembly. Interacts with VgRBP71. Expressed in oocytes.

It is found in the cytoplasm. In terms of biological role, RNA-binding protein, which is required during gametogenesis. May be involved in the actin-dependent anchoring of Vg1 mRNA in the vegetal cortex of the oocyte. The polypeptide is DAZ-associated protein 1 (dazap1) (Xenopus laevis (African clawed frog)).